Here is a 447-residue protein sequence, read N- to C-terminus: MSQSKADYINVIGAGLAGSEAAYQIAKRGIPVKLYEMRGVKATPQHKTTNFAELVCSNSFRGDSLTNAVGLLKEEMRRLDSIIMRNGEAHRVPAGGAMAVDREGYAEAVTAEIESHPLIEVIRKEITEIPDDAITVIASGPLTSDALAEKIHELNGGDGFYFYDAAAPIVDKATIDMNKVYLKSRYDKGEAAYLNCPMTKEEFMAFYEALTTAEEAPLNSFEKEKYFEGCMPIEVMAKRGIKTMLYGPMKPVGLEYPEDYMGPRDGDFKTPYAVVQLRQDNAAGSLYNIVGFQTHLKWGEQKRVFQMIPGLENAEFVRYGVMHRNSYMDSPNLLKQTFQSKSNPNLFFAGQMTGVEGYVESAASGLVAGINAARLFKGEDEVIFPHTTAIGSLPYYVTHAESKHFQPMNVNFGIIKELEGPRIRDKKERYEKIAERALKDLQTFIDA.

Residue 13 to 18 (GAGLAG) coordinates FAD.

This sequence belongs to the MnmG family. TrmFO subfamily. FAD serves as cofactor.

The protein localises to the cytoplasm. The catalysed reaction is uridine(54) in tRNA + (6R)-5,10-methylene-5,6,7,8-tetrahydrofolate + NADH + H(+) = 5-methyluridine(54) in tRNA + (6S)-5,6,7,8-tetrahydrofolate + NAD(+). It catalyses the reaction uridine(54) in tRNA + (6R)-5,10-methylene-5,6,7,8-tetrahydrofolate + NADPH + H(+) = 5-methyluridine(54) in tRNA + (6S)-5,6,7,8-tetrahydrofolate + NADP(+). Catalyzes the folate-dependent formation of 5-methyl-uridine at position 54 (M-5-U54) in all tRNAs. This Streptococcus thermophilus (strain ATCC BAA-491 / LMD-9) protein is Methylenetetrahydrofolate--tRNA-(uracil-5-)-methyltransferase TrmFO.